The chain runs to 546 residues: MFDNYSRESYIFNAGSLGHIKGLTITSHGSPAVHYFGGLPYALPPVGQWRFRVPRRLPKDYRYGTATEPGKFTDGTKICPQPPSSNTPDPSVVSEDCLQLNIWVPAGPPPIHGWPVCFYIHGGFLQVGTSNTKPEDLVSLLNESAFRAIMVLPSYRLNVFGFLASKALAAEASSNGEATGNYGLWDQRLALEWTHENIRLFGGDRSNITVAGYSAGAYSTFQQLAHELFRVPEEKAIIRRVAMFSNSTGVMPKSLQDQQLQCDELLRRLGINLDLSYDEKLASLRAVPHDRLVQAQIGMRISEFRVLADDAFYPLDLMDKINNGEFAKRMKIRGIRLMNGECESEHIMYCRWRTPQESYSAVYQRLLADFSPEVTQKIMEHYCGSSENLPVGYKNWEEFFGRVYANIQVHYLQRGFHNALFTGGLEAGRDVFRYRFERRLDCVAEKIPSEWGVTHLTDIPVWLWGCGYTNGLDDQEKKWLKGWNEGFAVFVNGDEVNWGTKNPKDMRRWRRDGKTDVCEDNSWEDGLKFWKLVNSGHRGTEGKAND.

The segment at 72–91 is disordered; it reads FTDGTKICPQPPSSNTPDPS. The active-site Acyl-ester intermediate is the S214.

It belongs to the type-B carboxylesterase/lipase family.

It carries out the reaction a carboxylic ester + H2O = an alcohol + a carboxylate + H(+). In terms of biological role, carboxylic ester hydrolase; part of the Fusarium detoxification of benzoxazolinone cluster 2 (FDB2) involved in the degradation of benzoxazolinones produced by the host plant. Maize, wheat, and rye produce the 2 benzoxazinone phytoanticipins 2,4-dihy-droxy-7-methoxy-1,4-benzoxazin-3-one (DIMBOA) and 2,4-dihydroxy-1,4-benzoxazin-3-one (DIBOA) that, due to their inherent instability once released, spontaneously degrade to the more stable corresponding benzoxazolinones, 6-methoxy-2-benzoxazolinone (MBOA) and 2-benzoxazolinone (BOA), respectively. The first step in the detoxification of benzoxazolinones involves the hydrolysis of the cyclic ester bond of benzoxazolinones by the FDB1 cluster gamma-lactamase MBL1 to aminophenols. MBL1 is able to convert BOA into 2-aminophenol (2-AP), as well as MBOA into 5-methoxy-2-aminophenol (2-AMP). The FDB2 cluster N-malonyltransferase FDB2/NAT1 then metabolizes aminophenols via N-malonylation to non-toxic malonamic acids. FDB2/NAT1 converts 2-AP into N-(2-hydroxyphenyl) malonamic acid (HPMA) and 2-AMP into N-(2-hydroxy-4-methoxyphenyl) malonamic acid (HMPMA). The duplicated dienlactone hydrolases DLH1 and DLH2 may provide redundant function for hydrolyzing the lactone moiety in the BOA molecule. The roles of the amidases an other enzymes encoded by the 2 FDB clusters have not been identified so far. The sequence is that of Carboxylic ester hydrolase FVEG_12634 from Gibberella moniliformis (strain M3125 / FGSC 7600) (Maize ear and stalk rot fungus).